The sequence spans 209 residues: GTP cyclohydrolase-2 (209 aa).

49–53 lines the GTP pocket; sequence RIHSE. 3 residues coordinate Zn(2+): Cys-54, Cys-65, and Cys-67. GTP is bound by residues Gln-70, 92-94, and Thr-114; that span reads EGR. The active-site Proton acceptor is Asp-126. Residue Arg-128 is the Nucleophile of the active site. Residues Thr-149 and Lys-154 each coordinate GTP.

This sequence belongs to the GTP cyclohydrolase II family. It depends on Zn(2+) as a cofactor.

The enzyme catalyses GTP + 4 H2O = 2,5-diamino-6-hydroxy-4-(5-phosphoribosylamino)-pyrimidine + formate + 2 phosphate + 3 H(+). The protein operates within cofactor biosynthesis; riboflavin biosynthesis; 5-amino-6-(D-ribitylamino)uracil from GTP: step 1/4. Catalyzes the conversion of GTP to 2,5-diamino-6-ribosylamino-4(3H)-pyrimidinone 5'-phosphate (DARP), formate and pyrophosphate. This chain is GTP cyclohydrolase-2, found in Shewanella pealeana (strain ATCC 700345 / ANG-SQ1).